Here is a 389-residue protein sequence, read N- to C-terminus: MNFHEYQSKQLLAEYGIPVPAGKVASTPDEAVEVANSLGKGPWMVKAQIHAGGRGKAGGVKFCKTTDDVKAAADKMLGTKMSTYQTAGVELPVNLVLVTTAGEIVKELYLSILVDRGTKTITYIASSEGGVEIEQVAAETPELIHSLNVDFVEGVQGYHGRDFGFKLGLNAKQAGQFASIMVNLYRLFNDKDLALVEINPLAILDDGNLYALDGKFDSDDNAAFRQKALVAMRDKTQEDETEVTASELDINYVTMDGNIGCMVNGAGLAMATMDVIKLNGGEPANFLDVGGGANKQRVIEAFKLILSSDKVEGIFVNIFGGIVRCDMIAEGIIAAVKEVGVKVPVVVRLEGTNVEEGKQLLRDSGMAIIPADNINDGAKKVVEAVKNAA.

The 236-residue stretch at 9 to 244 (KQLLAEYGIP…KTQEDETEVT (236 aa)) folds into the ATP-grasp domain. Residues lysine 46, 53-55 (GRG), glycine 102, and glutamate 107 each bind ATP. Mg(2+) is bound by residues asparagine 199 and aspartate 213. Residues asparagine 264 and 321–323 (GIV) contribute to the substrate site.

It belongs to the succinate/malate CoA ligase beta subunit family. Heterotetramer of two alpha and two beta subunits. It depends on Mg(2+) as a cofactor.

It carries out the reaction succinate + ATP + CoA = succinyl-CoA + ADP + phosphate. It catalyses the reaction GTP + succinate + CoA = succinyl-CoA + GDP + phosphate. The protein operates within carbohydrate metabolism; tricarboxylic acid cycle; succinate from succinyl-CoA (ligase route): step 1/1. Its function is as follows. Succinyl-CoA synthetase functions in the citric acid cycle (TCA), coupling the hydrolysis of succinyl-CoA to the synthesis of either ATP or GTP and thus represents the only step of substrate-level phosphorylation in the TCA. The beta subunit provides nucleotide specificity of the enzyme and binds the substrate succinate, while the binding sites for coenzyme A and phosphate are found in the alpha subunit. The polypeptide is Succinate--CoA ligase [ADP-forming] subunit beta (Xanthomonas campestris pv. campestris (strain 8004)).